A 340-amino-acid polypeptide reads, in one-letter code: tRNA N6-adenosine threonylcarbamoyltransferase (340 aa).

Positions 111 and 115 each coordinate Fe cation. Residues Ile134–Ala138, Asp167, Gly180, and Asn273 contribute to the substrate site. Asp301 is a Fe cation binding site.

This sequence belongs to the KAE1 / TsaD family. Requires Fe(2+) as cofactor.

Its subcellular location is the cytoplasm. It carries out the reaction L-threonylcarbamoyladenylate + adenosine(37) in tRNA = N(6)-L-threonylcarbamoyladenosine(37) in tRNA + AMP + H(+). Required for the formation of a threonylcarbamoyl group on adenosine at position 37 (t(6)A37) in tRNAs that read codons beginning with adenine. Is involved in the transfer of the threonylcarbamoyl moiety of threonylcarbamoyl-AMP (TC-AMP) to the N6 group of A37, together with TsaE and TsaB. TsaD likely plays a direct catalytic role in this reaction. The sequence is that of tRNA N6-adenosine threonylcarbamoyltransferase from Wigglesworthia glossinidia brevipalpis.